The primary structure comprises 116 residues: Iron-sulfur cluster insertion protein ErpA (116 aa).

Residues Cys-44, Cys-108, and Cys-110 each contribute to the iron-sulfur cluster site.

This sequence belongs to the HesB/IscA family. As to quaternary structure, homodimer. The cofactor is iron-sulfur cluster.

Its function is as follows. Required for insertion of 4Fe-4S clusters for at least IspG. This chain is Iron-sulfur cluster insertion protein ErpA, found in Pseudomonas syringae pv. syringae (strain B728a).